The following is a 1488-amino-acid chain: Chromosome partition protein MukB (1488 aa).

34–41 serves as a coordination point for ATP; it reads GGNGAGKS. Coiled coils occupy residues 326 to 418, 444 to 472, and 509 to 602; these read LEAD…QYNQ, LDTFQAKEQEATEKLLSLEQKMSVAQTAH, and RHLA…QRAP. Residues 666-783 form a flexible hinge region; sequence PGGAEDQRLN…SLPIFGRAAR (118 aa). Coiled coils occupy residues 835–923, 977–1116, and 1209–1265; these read EAEI…AKLE, EMLS…AKAG, and VEAI…LQSV. Residues 1049 to 1074 are disordered; it reads ADSGAEERARQRRDELHAQLSNNRSR. Residues 1051 to 1065 show a composition bias toward basic and acidic residues; it reads SGAEERARQRRDELH.

The protein belongs to the SMC family. MukB subfamily. As to quaternary structure, homodimerization via its hinge domain. Binds to DNA via its C-terminal region. Interacts, and probably forms a ternary complex, with MukE and MukF via its C-terminal region. The complex formation is stimulated by calcium or magnesium. Interacts with tubulin-related protein FtsZ.

The protein localises to the cytoplasm. The protein resides in the nucleoid. Plays a central role in chromosome condensation, segregation and cell cycle progression. Functions as a homodimer, which is essential for chromosome partition. Involved in negative DNA supercoiling in vivo, and by this means organize and compact chromosomes. May achieve or facilitate chromosome segregation by condensation DNA from both sides of a centrally located replisome during cell division. This Salmonella arizonae (strain ATCC BAA-731 / CDC346-86 / RSK2980) protein is Chromosome partition protein MukB.